The sequence spans 353 residues: Guanine nucleotide-binding protein subunit alpha (353 aa).

Glycine 2 carries the N-myristoyl glycine lipid modification. The S-palmitoyl cysteine moiety is linked to residue cysteine 3. The 321-residue stretch at 33–353 folds into the G-alpha domain; that stretch reads NEIKMLLLGA…QLHLRECGLL (321 aa). Residues 36–49 form a G1 motif region; that stretch reads KMLLLGAGESGKST. GTP contacts are provided by glutamate 44, serine 45, glycine 46, lysine 47, serine 48, threonine 49, aspartate 150, leucine 175, threonine 181, glycine 203, asparagine 269, lysine 270, aspartate 272, and alanine 325. Mg(2+) is bound at residue serine 48. The segment at 173–181 is G2 motif; the sequence is DILRSRVKT. Mg(2+) is bound at residue threonine 181. Residues 196-205 are G3 motif; it reads YKLFDVGGQR. Residues 265 to 272 form a G4 motif region; it reads ILFLNKID. The G5 motif stretch occupies residues 323-328; sequence TCATDT.

Belongs to the G-alpha family. G(q) subfamily. G proteins are composed of 3 units; alpha, beta and gamma. The alpha chain contains the guanine nucleotide binding site. Requires Mg(2+) as cofactor.

In terms of biological role, guanine nucleotide-binding proteins (G proteins) are involved as modulators or transducers in various transmembrane signaling systems. The sequence is that of Guanine nucleotide-binding protein subunit alpha (CGP1) from Coprinellus congregatus (Inky cap fungus).